A 277-amino-acid chain; its full sequence is Hematopoietically-expressed homeobox protein HHEX (277 aa).

Disordered stretches follow at residues 47 to 69 and 199 to 277; these read AAPAPHSLPAPPPPTLPSPNSSF and WRRL…SATR. Residues 52-63 are compositionally biased toward pro residues; sequence HSLPAPPPPTLP. The homeobox DNA-binding region spans 144–203; the sequence is RKGGQVRFSNEQTIELEKKFETQKYLSPPERKRLAKLLQLSERQVKTWFQNRRAKWRRLK. The segment covering 210–226 has biased composition (basic and acidic residues); that stretch reads TKKEEAEGTGDHGDPRS. Acidic residues predominate over residues 250–266; sequence EDPESDVSDDSDQEVDI.

As to expression, in all hematopoietic tissues except peripheral blood erythrocytes and in the liver and lung.

Its subcellular location is the nucleus. Functionally, recognizes the DNA sequence 5'-ATTAA-3'. Transcriptional repressor. May play a role in hematopoietic differentiation. The sequence is that of Hematopoietically-expressed homeobox protein HHEX (HHEX) from Gallus gallus (Chicken).